The following is a 414-amino-acid chain: 26S proteasome regulatory subunit 6B homolog (414 aa).

The tract at residues 1 to 33 is disordered; it reads MAATMVLDPKPSSTPPPTLPNPYTTDSQSTDSE. Low complexity predominate over residues 21-30; the sequence is NPYTTDSQST. The stretch at 55–81 forms a coiled coil; that stretch reads EYVKDELKNLKREQLRSQEEVKRIQSV. 202–209 provides a ligand contact to ATP; it reads GPPGTGKT.

This sequence belongs to the AAA ATPase family.

Its subcellular location is the cytoplasm. The protein resides in the nucleus. The 26S proteasome is involved in the ATP-dependent degradation of ubiquitinated proteins. The regulatory (or ATPase) complex confers ATP dependency and substrate specificity to the 26S complex. In Helianthus annuus (Common sunflower), this protein is 26S proteasome regulatory subunit 6B homolog.